The chain runs to 461 residues: Spermidine coumaroyl-CoA acyltransferase (461 aa).

Residues histidine 168 and aspartate 393 each act as proton acceptor in the active site.

The protein belongs to the plant acyltransferase family. As to quaternary structure, monomer. As to expression, mainly expressed in roots at low levels, specifically, in the root tip.

The enzyme catalyses 2 (E)-4-coumaroyl-CoA + spermidine = N(1),N(8)-bis(coumaroyl)-spermidine + 2 CoA + 2 H(+). It participates in amine and polyamine metabolism; spermidine metabolism. Functionally, spermidine coumaroyl-CoA acyltransferase that mediates the conversion of spermidine into dicoumaroyl-spermidine. This chain is Spermidine coumaroyl-CoA acyltransferase, found in Arabidopsis thaliana (Mouse-ear cress).